An 804-amino-acid chain; its full sequence is Probable replication endonuclease from prophage-like region 1 (804 aa).

Active-site O-(5'-phospho-DNA)-tyrosine intermediate residues include Y498 and Y502.

It belongs to the phage GPA family.

Its function is as follows. Possible endonuclease which induces a single-strand cut and initiates DNA replication. The sequence is that of Probable replication endonuclease from prophage-like region 1 from Salmonella typhi.